Consider the following 491-residue polypeptide: Ketol-acid reductoisomerase (NADP(+)) (491 aa).

Positions 15 to 208 constitute a KARI N-terminal Rossmann domain; sequence AQLGKCRFMG…GGHRAGVLES (194 aa). NADP(+) contacts are provided by residues 45–48, Arg68, Arg76, Ser78, and 108–110; these read CGAQ and DKQ. His132 is an active-site residue. An NADP(+)-binding site is contributed by Gly158. KARI C-terminal knotted domains follow at residues 209-344 and 345-484; these read SFVA…TAPQ and YEGK…MTDM. Residues Asp217, Glu221, Glu389, and Glu393 each contribute to the Mg(2+) site. Substrate is bound at residue Ser414.

This sequence belongs to the ketol-acid reductoisomerase family. The cofactor is Mg(2+).

It carries out the reaction (2R)-2,3-dihydroxy-3-methylbutanoate + NADP(+) = (2S)-2-acetolactate + NADPH + H(+). It catalyses the reaction (2R,3R)-2,3-dihydroxy-3-methylpentanoate + NADP(+) = (S)-2-ethyl-2-hydroxy-3-oxobutanoate + NADPH + H(+). The protein operates within amino-acid biosynthesis; L-isoleucine biosynthesis; L-isoleucine from 2-oxobutanoate: step 2/4. It participates in amino-acid biosynthesis; L-valine biosynthesis; L-valine from pyruvate: step 2/4. Involved in the biosynthesis of branched-chain amino acids (BCAA). Catalyzes an alkyl-migration followed by a ketol-acid reduction of (S)-2-acetolactate (S2AL) to yield (R)-2,3-dihydroxy-isovalerate. In the isomerase reaction, S2AL is rearranged via a Mg-dependent methyl migration to produce 3-hydroxy-3-methyl-2-ketobutyrate (HMKB). In the reductase reaction, this 2-ketoacid undergoes a metal-dependent reduction by NADPH to yield (R)-2,3-dihydroxy-isovalerate. This chain is Ketol-acid reductoisomerase (NADP(+)), found in Escherichia coli (strain 55989 / EAEC).